A 407-amino-acid polypeptide reads, in one-letter code: 3-oxoacyl-[acyl-carrier-protein] synthase 1 (407 aa).

Residues 1-406 (MKRVVITGFG…GTNVSLILKK (406 aa)) form the Ketosynthase family 3 (KS3) domain. Residues Cys-164, His-300, and His-336 each act as for beta-ketoacyl synthase activity in the active site.

Belongs to the thiolase-like superfamily. Beta-ketoacyl-ACP synthases family. Homodimer.

Its subcellular location is the cytoplasm. It catalyses the reaction a fatty acyl-[ACP] + malonyl-[ACP] + H(+) = a 3-oxoacyl-[ACP] + holo-[ACP] + CO2. It carries out the reaction (3Z)-decenoyl-[ACP] + malonyl-[ACP] + H(+) = 3-oxo-(5Z)-dodecenoyl-[ACP] + holo-[ACP] + CO2. Its pathway is lipid metabolism; fatty acid biosynthesis. Involved in the type II fatty acid elongation cycle. Catalyzes the elongation of a wide range of acyl-ACP by the addition of two carbons from malonyl-ACP to an acyl acceptor. Can also use unsaturated fatty acids. Catalyzes a key reaction in unsaturated fatty acid (UFA) synthesis, the elongation of the cis-3-decenoyl-ACP produced by FabA. This Buchnera aphidicola subsp. Schizaphis graminum (strain Sg) protein is 3-oxoacyl-[acyl-carrier-protein] synthase 1 (fabB).